The following is a 137-amino-acid chain: Small ribosomal subunit protein uS12 (137 aa).

Positions 1 to 43 (MPTINQLVRKGRVSKTKKSDSPALNKGYNSFKKRMTDQNAPQK) are disordered.

This sequence belongs to the universal ribosomal protein uS12 family. In terms of assembly, part of the 30S ribosomal subunit. Contacts proteins S8 and S17. May interact with IF1 in the 30S initiation complex.

With S4 and S5 plays an important role in translational accuracy. In terms of biological role, interacts with and stabilizes bases of the 16S rRNA that are involved in tRNA selection in the A site and with the mRNA backbone. Located at the interface of the 30S and 50S subunits, it traverses the body of the 30S subunit contacting proteins on the other side and probably holding the rRNA structure together. The combined cluster of proteins S8, S12 and S17 appears to hold together the shoulder and platform of the 30S subunit. The polypeptide is Small ribosomal subunit protein uS12 (Oceanobacillus iheyensis (strain DSM 14371 / CIP 107618 / JCM 11309 / KCTC 3954 / HTE831)).